Here is a 293-residue protein sequence, read N- to C-terminus: Small ribosomal subunit biogenesis GTPase RsgA (293 aa).

The CP-type G domain occupies 63 to 223; sequence KNELVRPPIA…VADTPGFSSL (161 aa). GTP is bound by residues 112–115 and 166–174; these read SKMD and GQSGVGKSS. Zn(2+) is bound by residues cysteine 247, cysteine 252, histidine 254, and cysteine 260.

Belongs to the TRAFAC class YlqF/YawG GTPase family. RsgA subfamily. As to quaternary structure, monomer. Associates with 30S ribosomal subunit, binds 16S rRNA. The cofactor is Zn(2+).

Its subcellular location is the cytoplasm. In terms of biological role, one of several proteins that assist in the late maturation steps of the functional core of the 30S ribosomal subunit. Helps release RbfA from mature subunits. May play a role in the assembly of ribosomal proteins into the subunit. Circularly permuted GTPase that catalyzes slow GTP hydrolysis, GTPase activity is stimulated by the 30S ribosomal subunit. This chain is Small ribosomal subunit biogenesis GTPase RsgA, found in Bacillus cytotoxicus (strain DSM 22905 / CIP 110041 / 391-98 / NVH 391-98).